We begin with the raw amino-acid sequence, 745 residues long: Cullin-2 (745 aa).

Lys-393 is subject to N6-acetyllysine. Phosphothreonine is present on Thr-661. One can recognise a Cullin neddylation domain in the interval 675–735 (DRKMYLQAAI…IDKQYIERSQ (61 aa)). A Glycyl lysine isopeptide (Lys-Gly) (interchain with G-Cter in NEDD8) cross-link involves residue Lys-689.

It belongs to the cullin family. As to quaternary structure, component of multiple Cul2-RING (CRL2) E3 ubiquitin-protein ligase complexes consisting of CUL2, Elongin BC (ELOB and ELOC), RBX1 and a variable substrate-specific adapter; this complex is also known as ECS (Elongin BC-CUL2/5-SOCS-box protein) complex and may consist of CUL2 or CUL5. Component of the ECS(VHL) or CBC(VHL) complex containing CUL2, RBX1, ELOB, ELOC and VHL. Component of the ECS(MED8) complex with the probable substrate recognition component MED8. Component of multiple ECS complexes part of the DesCEND (destruction via C-end degrons) pathway, which contain either KLHDC2, KLHDC3, KLHDC10, APPBP2, FEM1A, FEM1B or FEM1C as substrate-recognition component. Component of the ECS(LRR1) complex with the substrate recognition component LRR1. Component of a CRL2(FEM1B) complex containing CUL2, RBX1, ELOB, ELOC and FEM1B. Component of a CRL2(FEM1C) complex containing CUL2, RBX1, ELOB, ELOC and FEM1C. Part of an E3 ubiquitin-protein ligase complex including ZYG11B, CUL2 and Elongin BC. Part of an E3 ubiquitin-protein ligase complex including ZER1, CUL2 and Elongin BC. Interacts with RBX1, RNF7, FEM1B and TIP120A/CAND1. Found in a complex composed of LIMD1, VHL, EGLN1/PHD2, ELOB and CUL2. Interacts (when neddylated) with ARIH1; leading to activate the E3 ligase activity of ARIH1. Interacts (unneddylated form) with DCUN1D1, DCUN1D2, DCUN1D3, DCUN1D4 and DCUN1D5; these interactions promote the cullin neddylation. Component of VCB (elongins BC/CUL2/VHL) complex that contains at least DCUN1D1, CUL2 and VHL; this complex triggers CUL2 neddylation and consequently cullin ring ligase (CRL) substrates polyubiquitylation. Post-translationally, neddylated; which enhances the ubiquitination activity of ECS (Elongin BC-CUL2/5-SOCS-box protein) E3 ubiquitin-protein ligase complexes. Neddylation leads to structural rearrangment in the complex that allows interaction between the E2 ubiquitin-conjugating enzyme and the acceptor ubiquitin. CBC(VHL) complex formation seems to promote neddylation. Deneddylated via its interaction with the COP9 signalosome (CSN) complex.

The protein resides in the nucleus. It participates in protein modification; protein ubiquitination. Functionally, core component of multiple cullin-RING-based ECS (ElonginB/C-CUL2/5-SOCS-box protein) E3 ubiquitin-protein ligase complexes, which mediate the ubiquitination of target proteins. CUL2 may serve as a rigid scaffold in the complex and may contribute to catalysis through positioning of the substrate and the ubiquitin-conjugating enzyme. The E3 ubiquitin-protein ligase activity of the complex is dependent on the neddylation of the cullin subunit and is inhibited by the association of the deneddylated cullin subunit with TIP120A/CAND1. The functional specificity of the ECS complex depends on the substrate recognition component. ECS(VHL) mediates the ubiquitination of hypoxia-inducible factor (HIF). A number of ECS complexes (containing either KLHDC2, KLHDC3, KLHDC10, APPBP2, FEM1A, FEM1B or FEM1C as substrate-recognition component) are part of the DesCEND (destruction via C-end degrons) pathway, which recognizes a C-degron located at the extreme C terminus of target proteins, leading to their ubiquitination and degradation. ECS complexes and ARIH1 collaborate in tandem to mediate ubiquitination of target proteins. ECS(LRR1) ubiquitinates MCM7 and promotes CMG replisome disassembly by VCP and chromatin extraction during S-phase. In Pongo abelii (Sumatran orangutan), this protein is Cullin-2 (CUL2).